The sequence spans 308 residues: Carbamate kinase (308 aa).

Belongs to the carbamate kinase family.

The protein localises to the cytoplasm. The enzyme catalyses hydrogencarbonate + NH4(+) + ATP = carbamoyl phosphate + ADP + H2O + H(+). The protein is Carbamate kinase of Synechocystis sp. (strain ATCC 27184 / PCC 6803 / Kazusa).